Reading from the N-terminus, the 687-residue chain is Homoaconitase, mitochondrial (687 aa).

A mitochondrion-targeting transit peptide spans M1–Y18. The [4Fe-4S] cluster site is built by C340, C400, and C403. A compositionally biased stretch (acidic residues) spans E481–E490. The tract at residues E481–L500 is disordered.

The protein belongs to the aconitase/IPM isomerase family. [4Fe-4S] cluster is required as a cofactor.

The protein localises to the mitochondrion. The catalysed reaction is (2R,3S)-homoisocitrate = cis-homoaconitate + H2O. It functions in the pathway amino-acid biosynthesis; L-lysine biosynthesis via AAA pathway; L-alpha-aminoadipate from 2-oxoglutarate: step 3/5. Functionally, catalyzes the reversible hydration of cis-homoaconitate to (2R,3S)-homoisocitrate, a step in the alpha-aminoadipate pathway for lysine biosynthesis. This is Homoaconitase, mitochondrial (LYS4) from Yarrowia lipolytica (strain CLIB 122 / E 150) (Yeast).